The sequence spans 34 residues: Photosystem I reaction center subunit XII (34 aa).

Residues 10–32 form a helical membrane-spanning segment; the sequence is VFVALVVAAHAAVLALRLSISLY.

The protein belongs to the PsaM family.

It is found in the cellular thylakoid membrane. In Parasynechococcus marenigrum (strain WH8102), this protein is Photosystem I reaction center subunit XII.